Here is a 599-residue protein sequence, read N- to C-terminus: NADH-quinone oxidoreductase subunit C/D (599 aa).

The segment at 1–189 is NADH dehydrogenase I subunit C; the sequence is MTDLTTHDLA…DPFVLTKQKE (189 aa). The interval 213–599 is NADH dehydrogenase I subunit D; that stretch reads DFMFLNLGPN…IDFVMSDVDR (387 aa).

This sequence in the N-terminal section; belongs to the complex I 30 kDa subunit family. It in the C-terminal section; belongs to the complex I 49 kDa subunit family. In terms of assembly, NDH-1 is composed of 13 different subunits. Subunits NuoB, CD, E, F, and G constitute the peripheral sector of the complex.

It localises to the cell inner membrane. It carries out the reaction a quinone + NADH + 5 H(+)(in) = a quinol + NAD(+) + 4 H(+)(out). Its function is as follows. NDH-1 shuttles electrons from NADH, via FMN and iron-sulfur (Fe-S) centers, to quinones in the respiratory chain. The immediate electron acceptor for the enzyme in this species is believed to be ubiquinone. Couples the redox reaction to proton translocation (for every two electrons transferred, four hydrogen ions are translocated across the cytoplasmic membrane), and thus conserves the redox energy in a proton gradient. This Pectobacterium carotovorum subsp. carotovorum (strain PC1) protein is NADH-quinone oxidoreductase subunit C/D.